We begin with the raw amino-acid sequence, 31 residues long: Cytochrome b6-f complex subunit 6 (31 aa).

A helical membrane pass occupies residues 4–24; sequence IISYFLFLIGALTLALVLFIG.

The protein belongs to the PetL family. In terms of assembly, the 4 large subunits of the cytochrome b6-f complex are cytochrome b6, subunit IV (17 kDa polypeptide, PetD), cytochrome f and the Rieske protein, while the 4 small subunits are PetG, PetL, PetM and PetN. The complex functions as a dimer.

The protein resides in the plastid. Its subcellular location is the chloroplast thylakoid membrane. Its function is as follows. Component of the cytochrome b6-f complex, which mediates electron transfer between photosystem II (PSII) and photosystem I (PSI), cyclic electron flow around PSI, and state transitions. PetL is important for photoautotrophic growth as well as for electron transfer efficiency and stability of the cytochrome b6-f complex. The sequence is that of Cytochrome b6-f complex subunit 6 from Marchantia polymorpha (Common liverwort).